The primary structure comprises 391 residues: Casein kinase II subunit alpha (391 aa).

The interaction with beta subunit stretch occupies residues 36 to 41 (QDDYQL). The 286-residue stretch at 39–324 (YQLVRKLGRG…AREAMEHPYF (286 aa)) folds into the Protein kinase domain. ATP contacts are provided by residues 45 to 53 (LGRGKYSEV) and K68. Catalysis depends on D156, which acts as the Proton acceptor. Phosphothreonine; by CDK1 is present on residues T344 and T360. Phosphoserine; by CDK1 occurs at positions 362 and 370.

This sequence belongs to the protein kinase superfamily. Ser/Thr protein kinase family. CK2 subfamily. Heterotetramer composed of two catalytic subunits (alpha chain and/or alpha' chain) and two regulatory subunits (beta chains). The tetramer can exist as a combination of 2 alpha/2 beta, 2 alpha'/2 beta or 1 alpha/1 alpha'/2 beta subunits. Also part of a CK2-SPT16-SSRP1 complex composed of SSRP1, SUPT16H, CSNK2A1, CSNK2A2 and CSNK2B, which forms following UV irradiation. Interacts with RNPS1. Interacts with SNAI1. Interacts with PML. Interacts with CCAR2. Interacts with HIRIP3. Post-translationally, phosphorylated at Thr-344, Thr-360, Ser-362 and Ser-370 by CDK1 in prophase and metaphase and dephosphorylated during anaphase. Phosphorylation does not directly affect casein kinase 2 activity, but may contribute to its regulation by forming binding sites for interacting proteins and/or targeting it to different compartments.

The protein resides in the nucleus. It catalyses the reaction L-seryl-[protein] + ATP = O-phospho-L-seryl-[protein] + ADP + H(+). The enzyme catalyses L-threonyl-[protein] + ATP = O-phospho-L-threonyl-[protein] + ADP + H(+). Constitutively active protein kinase whose activity is not directly affected by phosphorylation. Seems to be regulated by level of expression and localization. In terms of biological role, catalytic subunit of a constitutively active serine/threonine-protein kinase complex that phosphorylates a large number of substrates containing acidic residues C-terminal to the phosphorylated serine or threonine. Regulates numerous cellular processes, such as cell cycle progression, apoptosis and transcription, as well as viral infection. May act as a regulatory node which integrates and coordinates numerous signals leading to an appropriate cellular response. During mitosis, functions as a component of the p53/TP53-dependent spindle assembly checkpoint (SAC) that maintains cyclin-B-CDK1 activity and G2 arrest in response to spindle damage. Also required for p53/TP53-mediated apoptosis, phosphorylating 'Ser-392' of p53/TP53 following UV irradiation. Phosphorylates a number of DNA repair proteins in response to DNA damage, such as MDC1, MRE11, RAD9A, RAD51 and HTATSF1, promoting their recruitment to DNA damage sites. Can also negatively regulate apoptosis. Phosphorylates the caspases CASP9 and CASP2 and the apoptotic regulator NOL3. Phosphorylation protects CASP9 from cleavage and activation by CASP8, and inhibits the dimerization of CASP2 and activation of CASP8. Phosphorylates YY1, protecting YY1 from cleavage by CASP7 during apoptosis. Regulates transcription by direct phosphorylation of RNA polymerases I, II, III and IV. Also phosphorylates and regulates numerous transcription factors including NF-kappa-B, STAT1, CREB1, IRF1, IRF2, ATF1, ATF4, SRF, MAX, JUN, FOS, MYC and MYB. Phosphorylates Hsp90 and its co-chaperones FKBP4 and CDC37, which is essential for chaperone function. Mediates sequential phosphorylation of FNIP1, promoting its gradual interaction with Hsp90, leading to activate both kinase and non-kinase client proteins of Hsp90. Regulates Wnt signaling by phosphorylating CTNNB1 and the transcription factor LEF1. Acts as an ectokinase that phosphorylates several extracellular proteins. Phosphorylates PML at 'Ser-565' and primes it for ubiquitin-mediated degradation. Plays an important role in the circadian clock function by phosphorylating BMAL1 at 'Ser-90' which is pivotal for its interaction with CLOCK and which controls CLOCK nuclear entry. Phosphorylates FMR1, promoting FMR1-dependent formation of a membraneless compartment. May phosphorylate histone H2A on 'Ser-1'. In Mus musculus (Mouse), this protein is Casein kinase II subunit alpha (Csnk2a1).